Consider the following 131-residue polypeptide: Sec-independent protein translocase protein TatB (131 aa).

A helical transmembrane segment spans residues 2-22 (FDGIGFMELLLIGVLGLVVLG). Residues 69–131 (NQGLKNLAPE…ENAKSDKPNG (63 aa)) form a disordered region. A compositionally biased stretch (low complexity) spans 105-123 (AKETPAKETATTETTSTEN).

Belongs to the TatB family. As to quaternary structure, the Tat system comprises two distinct complexes: a TatABC complex, containing multiple copies of TatA, TatB and TatC subunits, and a separate TatA complex, containing only TatA subunits. Substrates initially bind to the TatABC complex, which probably triggers association of the separate TatA complex to form the active translocon.

It localises to the cell inner membrane. Functionally, part of the twin-arginine translocation (Tat) system that transports large folded proteins containing a characteristic twin-arginine motif in their signal peptide across membranes. Together with TatC, TatB is part of a receptor directly interacting with Tat signal peptides. TatB may form an oligomeric binding site that transiently accommodates folded Tat precursor proteins before their translocation. This is Sec-independent protein translocase protein TatB from Shewanella piezotolerans (strain WP3 / JCM 13877).